Consider the following 326-residue polypeptide: Beta-ketoacyl-[acyl-carrier-protein] synthase III (326 aa).

Active-site residues include Cys-111 and His-252. The interval 253–257 (QANIR) is ACP-binding. Asn-282 is a catalytic residue.

This sequence belongs to the thiolase-like superfamily. FabH family. As to quaternary structure, homodimer.

Its subcellular location is the plastid. The protein localises to the chloroplast. It catalyses the reaction malonyl-[ACP] + acetyl-CoA + H(+) = 3-oxobutanoyl-[ACP] + CO2 + CoA. Its pathway is lipid metabolism; fatty acid biosynthesis. Catalyzes the condensation reaction of fatty acid synthesis by the addition to an acyl acceptor of two carbons from malonyl-ACP. Catalyzes the first condensation reaction which initiates fatty acid synthesis and may therefore play a role in governing the total rate of fatty acid production. Possesses both acetoacetyl-ACP synthase and acetyl transacylase activities. Its substrate specificity determines the biosynthesis of branched-chain and/or straight-chain of fatty acids. The chain is Beta-ketoacyl-[acyl-carrier-protein] synthase III from Porphyra umbilicalis (Purple laver).